Consider the following 101-residue polypeptide: Ribonuclease kappa-B (101 aa).

The next 2 membrane-spanning stretches (helical) occupy residues 13 to 33 (ACGIVLSVWGVIMLSMLGIFF) and 68 to 88 (VGINCFIAAAIYVGVGAVSLC).

It belongs to the RNase K family.

The protein localises to the membrane. Endoribonuclease which preferentially cleaves ApU and ApG phosphodiester bonds. This is Ribonuclease kappa-B (rnasekb) from Danio rerio (Zebrafish).